A 199-amino-acid polypeptide reads, in one-letter code: Prolactin-1 (199 aa).

Intrachain disulfides connect Cys4–Cys11, Cys58–Cys174, and Cys191–Cys199. N-linked (GlcNAc...) asparagine glycosylation is present at Asn60.

It belongs to the somatotropin/prolactin family. In terms of processing, glycosylated.

Its subcellular location is the secreted. This is Prolactin-1 from Crocodylus novaeguineae (Crocodile).